The following is a 280-amino-acid chain: Pupal cuticle protein 36a (280 aa).

The signal sequence occupies residues 1–15; it reads MKLFVLAAVLGVCLA. Residues 135–198 form the Chitin-binding type R&amp;R domain; it reads AEGFAYDFET…SQGAHLPTPP (64 aa). The disordered stretch occupies residues 258–280; that stretch reads GAGRAGGTATSASEAPTTTIRLM.

This is Pupal cuticle protein 36a (PCP36a) from Manduca sexta (Tobacco hawkmoth).